Reading from the N-terminus, the 495-residue chain is RuBisCO large subunit-binding protein subunit alpha (495 aa).

It belongs to the chaperonin (HSP60) family. As to quaternary structure, oligomer of probably six alpha and six beta subunits.

The protein localises to the plastid. The protein resides in the chloroplast. This protein binds RuBisCO small and large subunits and is implicated in the assembly of the enzyme oligomer. The chain is RuBisCO large subunit-binding protein subunit alpha from Ricinus communis (Castor bean).